A 483-amino-acid polypeptide reads, in one-letter code: MKGLIARFIAGFALLLWAWDMVFPWQQLMQAEENRYNQIQQRKILRVGMVNHPLSYFIGAEGTAGIEYELAKSFANYLDVRLDIKTFDNSEQLFSALKDNKVDIAAAGLLYQPELSKQFQIGSAYYSASWQVVYKKGSNRPYKLSELEGDLIIPAGSAVLPILQRLKEDNPKLSWQTTNQFTQEELLLQVAEGKIPYTVGISVDISAAQHIRPNIAVGFDLTDEAPVLWYLPNSSYSELQAAVLDFMNHANETGLISRIEEKYFNHLAHFDYVDIQSYLKAIKLVLPKYQSLFEKYRGDLEWQMLAAIAYQESHWDPNATSPTGVRGMMMLTRDTAERMKITDRTSAEQSIRAGSEYLHMLMRQIPETVPKEDRIWYGLAAYNMGFGHLLDVRRLTRQLGGNPDNWLDVKKNLPLLAEKRHYSGLKYGYARGFEAFQYVENIRRYYSSIINHQRVEEQQIQNNEEQPSVPQEISKESDSTLKE.

The N-terminal stretch at 1 to 18 (MKGLIARFIAGFALLLWA) is a signal peptide. Residues 19–267 (WDMVFPWQQL…RIEEKYFNHL (249 aa)) form a non-LT domain region. The interval 269 to 483 (HFDYVDIQSY…SKESDSTLKE (215 aa)) is LT domain. The active site involves glutamate 312. The disordered stretch occupies residues 458–483 (QQIQNNEEQPSVPQEISKESDSTLKE). Over residues 473–483 (ISKESDSTLKE) the composition is skewed to basic and acidic residues.

This sequence in the N-terminal section; belongs to the bacterial solute-binding protein 3 family. It in the C-terminal section; belongs to the transglycosylase Slt family.

It is found in the cell outer membrane. It carries out the reaction Exolytic cleavage of the (1-&gt;4)-beta-glycosidic linkage between N-acetylmuramic acid (MurNAc) and N-acetylglucosamine (GlcNAc) residues in peptidoglycan, from either the reducing or the non-reducing ends of the peptidoglycan chains, with concomitant formation of a 1,6-anhydrobond in the MurNAc residue.. Functionally, murein-degrading enzyme that degrades murein glycan strands and insoluble, high-molecular weight murein sacculi, with the concomitant formation of a 1,6-anhydromuramoyl product. Lytic transglycosylases (LTs) play an integral role in the metabolism of the peptidoglycan (PG) sacculus. Their lytic action creates space within the PG sacculus to allow for its expansion as well as for the insertion of various structures such as secretion systems and flagella. The sequence is that of Membrane-bound lytic murein transglycosylase F from Actinobacillus pleuropneumoniae serotype 3 (strain JL03).